We begin with the raw amino-acid sequence, 1175 residues long: Topoisomerase 1-associated factor 1 (1175 aa).

Disordered regions lie at residues 894-982 (NYQS…DDEK) and 1043-1175 (SDGD…DDEE). The span at 910–921 (AKKRNSRKKSTK) shows a compositional bias: basic residues. Positions 930-940 (GDSDDDDDDAD) are enriched in acidic residues. Basic and acidic residues predominate over residues 954–966 (PRDLLFEEPKPLR). The segment covering 1044 to 1053 (DGDDDDDDGN) has biased composition (acidic residues). The segment covering 1078–1096 (ILDSVQSQVLDNGSSQGNF) has biased composition (polar residues). Acidic residues predominate over residues 1137 to 1156 (EEDDNADEDEDEDEDVDGEE).

The protein belongs to the timeless family. As to quaternary structure, component of the fork protection complex (FPC) consisting of TOF1 and CSM3.

Its subcellular location is the nucleus. Functionally, forms a fork protection complex (FPC) with CSM3 and which is required for chromosome segregation during meiosis and DNA damage repair. FPC coordinates leading and lagging strand synthesis and moves with the replication fork. FPC stabilizes replication forks in a configuration that is recognized by replication checkpoint sensors. This Lodderomyces elongisporus (strain ATCC 11503 / CBS 2605 / JCM 1781 / NBRC 1676 / NRRL YB-4239) (Yeast) protein is Topoisomerase 1-associated factor 1 (TOF1).